The following is a 183-amino-acid chain: Putative 3-methyladenine DNA glycosylase (183 aa).

The protein belongs to the DNA glycosylase MPG family.

This Legionella pneumophila (strain Lens) protein is Putative 3-methyladenine DNA glycosylase.